Here is a 332-residue protein sequence, read N- to C-terminus: 3'(2'),5'-bisphosphate nucleotidase (332 aa).

Catalysis depends on aspartate 49, which acts as the Proton acceptor. The Mg(2+) site is built by glutamate 73, aspartate 129, isoleucine 131, and aspartate 132. Threonine 134 acts as the Proton acceptor in catalysis. Adenosine 3',5'-bisphosphate contacts are provided by threonine 134, serine 245, lysine 248, arginine 262, and aspartate 274. 4 residues coordinate AMP: serine 245, lysine 248, arginine 262, and aspartate 274. Position 274 (aspartate 274) interacts with Mg(2+).

The protein belongs to the inositol monophosphatase superfamily. The cofactor is Mg(2+).

The catalysed reaction is 3'-phosphoadenylyl sulfate + H2O = adenosine 5'-phosphosulfate + phosphate. It catalyses the reaction adenosine 3',5'-bisphosphate + H2O = AMP + phosphate. The enzyme catalyses adenosine 2',5'-bisphosphate + H2O = AMP + phosphate. It carries out the reaction 1D-myo-inositol 1,4-bisphosphate + H2O = 1D-myo-inositol 4-phosphate + phosphate. The catalysed reaction is 1D-myo-inositol 1,3,4-trisphosphate + H2O = 1D-myo-inositol 3,4-bisphosphate + phosphate. Phosphatase that converts adenosine 3'-phosphate 5'-phosphosulfate (PAPS) to adenosine 5'-phosphosulfate (APS) and 3'(2')-phosphoadenosine 5'-phosphate (PAP) to AMP. Is also able to hydrolyze inositol 1,4-bisphosphate and inositol 1,3,4-trisphosphate. The chain is 3'(2'),5'-bisphosphate nucleotidase from Dictyostelium discoideum (Social amoeba).